Consider the following 134-residue polypeptide: MSDNAIRPRPNPWQYIRYCYGARLPDSMRDWVRNDLAGKGAAIRMMIRVAVPAVLVLAPFWLIPTSLDVHLSMTLPILIPFVYFSHALNKVWRRHMLRVHNLDPELVDEHARQRDAHIHRAYIERYGPRPDPND.

A run of 2 helical transmembrane segments spans residues 49-69 (VAVP…SLDV) and 71-91 (LSMT…LNKV).

The protein resides in the cell membrane. This is an uncharacterized protein from Mycobacterium tuberculosis (strain ATCC 25618 / H37Rv).